Here is a 477-residue protein sequence, read N- to C-terminus: Glutamate--tRNA ligase (477 aa).

The 'HIGH' region motif lies at 12–22; it reads PSPTGMFHVGG. Zn(2+) contacts are provided by Cys106, Cys108, Cys128, and Asp130. The 'KMSKS' region signature appears at 238 to 242; the sequence is KLSKR. ATP is bound at residue Lys241.

Belongs to the class-I aminoacyl-tRNA synthetase family. Glutamate--tRNA ligase type 1 subfamily. As to quaternary structure, monomer. Zn(2+) is required as a cofactor.

It is found in the cytoplasm. The enzyme catalyses tRNA(Glu) + L-glutamate + ATP = L-glutamyl-tRNA(Glu) + AMP + diphosphate. Catalyzes the attachment of glutamate to tRNA(Glu) in a two-step reaction: glutamate is first activated by ATP to form Glu-AMP and then transferred to the acceptor end of tRNA(Glu). This chain is Glutamate--tRNA ligase, found in Thermobifida fusca (strain YX).